The primary structure comprises 280 residues: Probable cell division protein WhiA (280 aa).

The segment at residues 246–279 (SLEQIAQFFERKYKVQITRSGIQHLNAKLKKLNQ) is a DNA-binding region (H-T-H motif).

This sequence belongs to the WhiA family.

Its function is as follows. Involved in cell division and chromosome segregation. The protein is Probable cell division protein WhiA of Mycoplasma pneumoniae (strain ATCC 29342 / M129 / Subtype 1) (Mycoplasmoides pneumoniae).